Here is a 341-residue protein sequence, read N- to C-terminus: Gibberellin 2-beta-dioxygenase 5 (341 aa).

The Fe2OG dioxygenase domain maps to 187–290 (REETCFLRLN…RFSMAFFLCP (104 aa)). Tyr198 contributes to the 2-oxoglutarate binding site. His213, Asp215, and His271 together coordinate Fe cation. The 2-oxoglutarate site is built by Arg281 and Ser283.

This sequence belongs to the iron/ascorbate-dependent oxidoreductase family. GA2OX subfamily. The cofactor is L-ascorbate. Fe(2+) is required as a cofactor. As to expression, expressed in roots, leaves, culms, leaf sheaths and young panicles.

It localises to the cytoplasm. It is found in the nucleus. It catalyses the reaction gibberellin A1 + 2-oxoglutarate + O2 = gibberellin A8 + succinate + CO2. It functions in the pathway plant hormone biosynthesis; gibberellin biosynthesis. Functionally, catalyzes the 2-beta-hydroxylation of several biologically active gibberellins (GAs), leading to the homeostatic regulation of their endogenous level. Catabolism of GAs plays a central role in plant development. In vitro, converts GA12 and GA53 to the corresponding 2-beta-hydroxylated products GA110 and GA97, respectively. In Oryza sativa subsp. japonica (Rice), this protein is Gibberellin 2-beta-dioxygenase 5.